The primary structure comprises 215 residues: Pyridoxine/pyridoxamine 5'-phosphate oxidase (215 aa).

Substrate is bound by residues 11-14 (RRDY) and K69. FMN is bound by residues 64–69 (RVVLLK), 79–80 (YT), K86, and Q108. Residues Y126, R130, and S134 each contribute to the substrate site. FMN-binding positions include 143 to 144 (QS) and W188. 194 to 196 (RLH) lines the substrate pocket. Position 198 (R198) interacts with FMN.

This sequence belongs to the pyridoxamine 5'-phosphate oxidase family. Homodimer. The cofactor is FMN.

It carries out the reaction pyridoxamine 5'-phosphate + O2 + H2O = pyridoxal 5'-phosphate + H2O2 + NH4(+). The catalysed reaction is pyridoxine 5'-phosphate + O2 = pyridoxal 5'-phosphate + H2O2. Its pathway is cofactor metabolism; pyridoxal 5'-phosphate salvage; pyridoxal 5'-phosphate from pyridoxamine 5'-phosphate: step 1/1. It participates in cofactor metabolism; pyridoxal 5'-phosphate salvage; pyridoxal 5'-phosphate from pyridoxine 5'-phosphate: step 1/1. Catalyzes the oxidation of either pyridoxine 5'-phosphate (PNP) or pyridoxamine 5'-phosphate (PMP) into pyridoxal 5'-phosphate (PLP). The protein is Pyridoxine/pyridoxamine 5'-phosphate oxidase of Legionella pneumophila (strain Paris).